The chain runs to 778 residues: Arf-GAP with coiled-coil, ANK repeat and PH domain-containing protein 2 (778 aa).

The region spanning 1-226 (MKMTVDFEEC…MKDLGAQLDR (226 aa)) is the BAR domain. One can recognise a PH domain in the interval 266–361 (GIVMEGYLFK…WIKAVQTSIA (96 aa)). The segment at 371 to 391 (SEKLDKKSSPSTGSLDSGNES) is disordered. Positions 379–388 (SPSTGSLDSG) are enriched in polar residues. 2 positions are modified to phosphoserine: Ser-384 and Ser-387. In terms of domain architecture, Arf-GAP spans 399–520 (ESALQRVQCI…KFVDKYSISL (122 aa)). The C4-type zinc-finger motif lies at 414 to 437 (CCDCGLADPRWASINLGITLCIEC). Ser-521 bears the Phosphoserine mark. Positions 540–599 (SISKFGPGDQVRASAQSSVRSNDSGIQQSSDDGRESLPSTVSANSLYEPEGERQDSSMFL) are disordered. A compositionally biased stretch (polar residues) spans 552–569 (ASAQSSVRSNDSGIQQSS). Residues Ser-581 and Ser-584 each carry the phosphoserine modification. 3 ANK repeats span residues 640–669 (NKAT…NVNQ), 673–702 (QGRG…NQHA), and 706–735 (EGKD…NEEM). At Tyr-742 the chain carries Phosphotyrosine. Residue Ser-775 is modified to Phosphoserine.

As to quaternary structure, interacts (via KANK domains) with RAB35 (GTP-bound form); the interaction is direct and probably recruits ACAP2 to membranes including plasma membrane. Interacts with MICALL1; the interaction is indirect through RAB35. Widely expressed. Highest level in lung.

The protein resides in the cell membrane. It is found in the endosome membrane. Its activity is regulated as follows. GAP activity stimulated by phosphatidylinositol 4,5-bisphosphate (PIP2) and phosphatidic acid. Functionally, GTPase-activating protein (GAP) for ADP ribosylation factor 6 (ARF6). Doesn't show GAP activity for RAB35. This Homo sapiens (Human) protein is Arf-GAP with coiled-coil, ANK repeat and PH domain-containing protein 2 (ACAP2).